The following is a 1332-amino-acid chain: SAGA complex subunit SPT7 (1332 aa).

Thr78 is subject to Phosphothreonine; by ATM or ATR. Disordered stretches follow at residues 80–118 (EEEHHGAVSPAVDTRSDDVSSQTIKDNNNTNTNTSISNE), 209–268 (VEEK…ISSS), and 331–384 (IEKG…PKQS). Residue Ser88 is modified to Phosphoserine. Over residues 106 to 118 (NNNTNTNTSISNE) the composition is skewed to low complexity. Positions 217–233 (IGKNEKPQNKEGISKFA) are enriched in basic and acidic residues. A compositionally biased stretch (acidic residues) spans 234 to 249 (EDEDYDDEDENYDEDS). The span at 250 to 260 (TDVKNVDDPPK) shows a compositional bias: basic and acidic residues. A compositionally biased stretch (acidic residues) spans 345–360 (AATDEQDRENTNDEPD). Positions 362–376 (NQKLPTPEGSTFSDT) are enriched in polar residues. The Bromo domain maps to 440–546 (IGQEELYEAC…KKSLQLIRMI (107 aa)). A compositionally biased stretch (acidic residues) spans 566-578 (KDKDYELDEEEEV). Disordered regions lie at residues 566-724 (KDKD…YLLE) and 1286-1332 (GAEN…RLNQ). Basic and acidic residues-rich tracts occupy residues 593–634 (LAKE…KDKT) and 644–697 (NVNK…KEAG). The span at 698–716 (ENNEEEEDDDDEDEDEDMV) shows a compositional bias: acidic residues. Phosphoserine is present on Ser1293. The segment covering 1316–1332 (NMGSNSSFSLSLPRLNQ) has biased composition (polar residues).

In terms of assembly, component of the 1.8 MDa SAGA (Spt-Ada-Gcn5 acetyltransferase) complex, which is composed of 19 subunits TRA1, SPT7, TAF5, NGG1/ADA3, SGF73, SPT20/ADA5, SPT8, TAF12, TAF6, HFI1/ADA1, UBP8, GCN5, ADA2, SPT3, SGF29, TAF10, TAF9, SGF11 and SUS1. The SAGA complex is composed of 4 modules, namely the HAT (histone acetyltransferase) module (GCN5, ADA2, NGG1/ADA3 and SGF29), the DUB (deubiquitinating) module (UBP8, SGF11, SGF73 and SUS1), the core or TAF (TBP-associated factor) module (TAF5, TAF6, TAF9, TAF10 and TAF12), and the Tra1 or SPT (Suppressor of Ty) module (TRA1, HFI1/ADA1, SPT3, SPT7, SPT8 and SPT20/ADA5). The Tra1/SPT module binds activators, the core module recruits TBP (TATA-binding protein), the HAT module contains the histone H3 acetyltransferase GCN5, and the DUB module comprises the histone H2B deubiquitinase UBP8. Also identified in an altered form of SAGA, named SALSA (SAGA altered, Spt8 absent) or SLIK (SAGA-like) complex, which contains a C-terminal truncated form of SPT7 and is missing SPT8. However, it has been shown that the SAGA and SAGA-like SALSA/SLIK transcriptional coactivators are structurally and biochemically equivalent. Identified in the Ada.spt complex with NGG1/ADA3 and TRA1. In terms of processing, protease PEP4 directly cleaves the C-terminus of SPT7(SAGA) to form SPT7(SLIK) within the SAGA complex in the nucleus.

The protein localises to the nucleus. Component of the transcription coactivator SAGA complex. SAGA acts as a general cofactor required for essentially all RNA polymerase II transcription. At the promoters, SAGA is required for transcription pre-initiation complex (PIC) recruitment. It influences RNA polymerase II transcriptional activity through different activities such as TBP interaction (via core/TAF module) and promoter selectivity, interaction with transcription activators (via Tra1/SPT module), and chromatin modification through histone acetylation (via HAT module) and deubiquitination (via DUB module). SAGA preferentially acetylates histones H3 (to form H3K9ac, H3K14ac, H3K18ac and H3K23ac) and H2B and deubiquitinates histone H2B. SAGA interacts with DNA via upstream activating sequences (UASs). Also identified in a modified version of SAGA named SALSA or SLIK. The cleavage of SPT7 and the absence of the SPT8 subunit in SLIK neither drive any major conformational differences in its structure compared with SAGA, nor significantly affect HAT, DUB, or DNA-binding activities. In Saccharomyces cerevisiae (strain ATCC 204508 / S288c) (Baker's yeast), this protein is SAGA complex subunit SPT7 (SPT7).